Reading from the N-terminus, the 34-residue chain is Brevinin-2Ec (34 aa).

Cys28 and Cys34 are oxidised to a cystine.

The protein belongs to the frog skin active peptide (FSAP) family. Brevinin subfamily. Expressed by the skin glands.

The protein resides in the secreted. Functionally, shows antibacterial activity against representative Gram-negative and Gram-positive bacterial species, and hemolytic activity. This is Brevinin-2Ec from Pelophylax lessonae (Pool frog).